The chain runs to 142 residues: Large ribosomal subunit protein bL17 (142 aa).

This sequence belongs to the bacterial ribosomal protein bL17 family. As to quaternary structure, part of the 50S ribosomal subunit. Contacts protein L32.

The sequence is that of Large ribosomal subunit protein bL17 from Chlamydia muridarum (strain MoPn / Nigg).